We begin with the raw amino-acid sequence, 127 residues long: Small ribosomal subunit protein uS11c (127 aa).

It belongs to the universal ribosomal protein uS11 family. Part of the 30S ribosomal subunit.

The protein localises to the plastid. It localises to the chloroplast. This chain is Small ribosomal subunit protein uS11c, found in Heterosigma akashiwo (strain NIES-293 / 8280G21-1).